The chain runs to 1258 residues: uncharacterized protein (1258 aa).

The stretch at 55 to 93 is one WD 1 repeat; the sequence is ELASEILGVCWQENGVLAAGISEGTWKRFLAGKQAINAE. Basic and acidic residues predominate over residues 112–128; the sequence is GGRTKERKDTGTSRQEK. Positions 112-138 are disordered; the sequence is GGRTKERKDTGTSRQEKFLSSSHPHTD. WD repeat units follow at residues 640–679, 682–721, 724–763, 766–807, 809–849, 850–889, 892–931, 934–975, 976–1017, 1019–1059, 1060–1101, 1103–1143, 1144–1183, and 1186–1227; these read ETLGNILSAAFSPEGQLLATCDTDCHVRVWEVKSGKLLLI, GHSNWVRFVVFSPDGEILASCGADENVKLWSVRDGVCIKT, GHEHEVFSVAFHPDGETLASASGDKTIKLWDIQDGTCLQT, GHTD…RTLK, HTGW…KTYI, GHTNSVYSIAYSPDSKILVSGSGDRTIKLWDCQTHICIKT, GHTNEVCSVAFSPDGQTLACVSLDQSVRLWNCRTGQCLKA, GNTD…SSLE, GHTD…QILL, HTDW…KTLS, EHSD…GILR, HSNR…KTLT, GHTNWVFDIAFSPDGKILASASHDQTVRIWDVNTGKCHHI, and GHTH…QILR.

This is an uncharacterized protein from Nostoc sp. (strain PCC 7120 / SAG 25.82 / UTEX 2576).